A 791-amino-acid polypeptide reads, in one-letter code: Protein SEY1 (791 aa).

Topologically, residues 1–685 (MSEDGASKCQ…KRSTIKSHTH (685 aa)) are cytoplasmic. A GB1/RHD3-type G domain is found at 40–268 (GLDYHVISVF…REDYYLSGKY (229 aa)). 50-57 (GSQSSGKS) serves as a coordination point for GTP. The chain crosses the membrane as a helical span at residues 686–706 (IPMWIYAIIAVLGWNEFMLVL). Residues 707–709 (RNP) are Lumenal-facing. The chain crosses the membrane as a helical span at residues 710-730 (LFIALMLLIVGAAYTVHRLNL). Topologically, residues 731–791 (WTPLATFASA…NETKENANES (61 aa)) are cytoplasmic. The interval 763-791 (PKNASSKPVESFEMQDLSVNETKENANES) is disordered.

The protein belongs to the TRAFAC class dynamin-like GTPase superfamily. GB1/RHD3 GTPase family. RHD3 subfamily.

It is found in the endoplasmic reticulum membrane. Functionally, cooperates with the reticulon proteins and tubule-shaping DP1 family proteins to generate and maintain the structure of the tubular endoplasmic reticulum network. Has GTPase activity, which is required for its function in ER organization. The protein is Protein SEY1 of Eremothecium gossypii (strain ATCC 10895 / CBS 109.51 / FGSC 9923 / NRRL Y-1056) (Yeast).